The primary structure comprises 65 residues: Small hydrophobic protein (65 aa).

Residues 1–20 lie on the Intravirion side of the membrane; that stretch reads MGNTSITIEFTSKFWPYFTL. Residues 6–15 form an interaction with host BCAP31 region; that stretch reads ITIEFTSKFW. The helical; Signal-anchor for type II membrane protein transmembrane segment at 21 to 44 threads the bilayer; sequence IHMILTPISLLIIITIMIAILNKL. Positions 38–43 are interaction with small-molecule inhibitor; the sequence is IAILNK. Topologically, residues 45–65 are virion surface; the sequence is SEHKTFCNKTLELGQMYQINT. A glycan (N-linked (GlcNAc...) asparagine; by host) is linked at Asn-52.

Belongs to the orthopneumovirus small hydrophobic protein family. In terms of assembly, homopentamer forming a funnel-like pore. Interacts with glycoprotein G; this interaction occurs on the surface of virion particles and infected cells. Interacts with host BCAP31 (via C-terminus); this interaction is direct. In terms of processing, four species of SH have been detected in infected cell cytoplasm: a 7.5 kDa non-glycosylated form (SH0), a 13-15 kDa form that contains one or two N-linked carbohydrate side chains of the high-mannose type (SHg), a 21-30 kDa polylactosaminoglycan-modified form of the protein (SHp), and the isoform generated by alternative translational initiation. Of these different forms, SH0 is by far the most abundant protein detected during virus infection. Post-translationally, tyrosine phosphorylated.

The protein localises to the virion membrane. It is found in the host cell membrane. The protein resides in the host Golgi apparatus membrane. Its subcellular location is the host endoplasmic reticulum membrane. Its activity is regulated as follows. Channel activity is inhibited by copper. Also inhibited by small-molecule pyronin B. Viroporin that forms a homopentameric ion channel displaying low ion selectivity. May play a role in virus morphogenesis and pathogenicity at various stages of the viral life cycle. Accumulates at the membrane of the Golgi apparatus in infected cells and may facilitate virus release by modifying the secretory pathway. May enhance host membrane permeability and disrupt cellular ion homeostasis, which can be sensed as damage-associated molecular patterns/danger signals, triggering NLRP3 inflammasome activation and inflammatory immune response. Also inhibits host TNFA-mediated signaling pathway and may delay apoptosis, allowing time for the virus to replicate. This chain is Small hydrophobic protein, found in Human respiratory syncytial virus B (strain 18537).